We begin with the raw amino-acid sequence, 388 residues long: Processive diacylglycerol beta-glucosyltransferase (388 aa).

It belongs to the glycosyltransferase 28 family. UgtP subfamily.

The protein localises to the cell membrane. The catalysed reaction is a 1,2-diacyl-3-O-(beta-D-glucopyranosyl)-sn-glycerol + UDP-alpha-D-glucose = a 1,2-diacyl-3-O-(beta-D-Glc-(1-&gt;6)-beta-D-Glc)-sn-glycerol + UDP + H(+). The enzyme catalyses a 1,2-diacyl-3-O-(beta-D-Glc-(1-&gt;6)-beta-D-Glc)-sn-glycerol + UDP-alpha-D-glucose = a 1,2-diacyl-3-O-(beta-D-Glc-(1-&gt;6)-beta-D-Glc-(1-&gt;6)-beta-D-Glc)-sn-glycerol + UDP + H(+). It carries out the reaction a 1,2-diacyl-sn-glycerol + UDP-alpha-D-glucose = a 1,2-diacyl-3-O-(beta-D-glucopyranosyl)-sn-glycerol + UDP + H(+). It functions in the pathway glycolipid metabolism; diglucosyl-diacylglycerol biosynthesis. Functionally, processive glucosyltransferase involved in the biosynthesis of both the bilayer- and non-bilayer-forming membrane glucolipids. Is able to successively transfer up to three glucosyl residues to diacylglycerol (DAG), thereby catalyzing the formation of beta-monoglucosyl-DAG (3-O-(beta-D-glucopyranosyl)-1,2-diacyl-sn-glycerol), beta-diglucosyl-DAG (3-O-(beta-D-glucopyranosyl-beta-(1-&gt;6)-D-glucopyranosyl)-1,2-diacyl-sn-glycerol) and beta-triglucosyl-DAG (3-O-(beta-D-glucopyranosyl-beta-(1-&gt;6)-D-glucopyranosyl-beta-(1-&gt;6)-D-glucopyranosyl)-1,2-diacyl-sn-glycerol). Beta-diglucosyl-DAG is the predominant glycolipid found in Bacillales and is also used as a membrane anchor for lipoteichoic acid (LTA). This is Processive diacylglycerol beta-glucosyltransferase from Bacillus cereus (strain B4264).